A 289-amino-acid chain; its full sequence is Agmatinase (289 aa).

6 residues coordinate Mn(2+): His-112, Asp-135, His-137, Asp-139, Asp-216, and Asp-218.

It belongs to the arginase family. Agmatinase subfamily. Requires Mn(2+) as cofactor.

It catalyses the reaction agmatine + H2O = urea + putrescine. Its pathway is amine and polyamine biosynthesis; putrescine biosynthesis via agmatine pathway; putrescine from agmatine: step 1/1. Catalyzes the formation of putrescine from agmatine. The chain is Agmatinase (speB) from Halalkalibacterium halodurans (strain ATCC BAA-125 / DSM 18197 / FERM 7344 / JCM 9153 / C-125) (Bacillus halodurans).